A 136-amino-acid polypeptide reads, in one-letter code: Large ribosomal subunit protein uL16 (136 aa).

This sequence belongs to the universal ribosomal protein uL16 family. Part of the 50S ribosomal subunit.

In terms of biological role, binds 23S rRNA and is also seen to make contacts with the A and possibly P site tRNAs. The protein is Large ribosomal subunit protein uL16 of Haemophilus ducreyi (strain 35000HP / ATCC 700724).